A 296-amino-acid polypeptide reads, in one-letter code: uncharacterized protein (296 aa).

A signal peptide spans 1–20 (MKKALGILAILLILVGGYFA).

This is an uncharacterized protein from Aquifex aeolicus (strain VF5).